The chain runs to 288 residues: Orotidine 5'-phosphate decarboxylase (288 aa).

The active-site Proton donor is the Lys99.

This sequence belongs to the OMP decarboxylase family. Type 2 subfamily.

It carries out the reaction orotidine 5'-phosphate + H(+) = UMP + CO2. It functions in the pathway pyrimidine metabolism; UMP biosynthesis via de novo pathway; UMP from orotate: step 2/2. The protein is Orotidine 5'-phosphate decarboxylase (pyrF) of Myxococcus xanthus (strain DK1622).